Consider the following 270-residue polypeptide: MAITAAEVKKLRDATGAGMMDAKKALTEADGDFDKAVDILRVSGAAKAAKRSDREASNGLVAAAGSSLVHIGSETDFVAKNEEFIAAAHEIAEAADKAGADSKDAANAAALADGTTVGDKLGELAAKIGEKIELANAAHFDGNAHVYLHRRSQDLPPQVGVMVEYEGDNIEAVHGVCLQIAAMSPRWLSRDEVPADVVEHERTVAADIAREEGKPEKIIDRIVEGRLGGFFKENCLLDQPAISDDKKTVAQTLEAAGVTLKRFVRFSAGE.

Positions 75 to 78 are involved in Mg(2+) ion dislocation from EF-Tu; sequence TDFV.

Belongs to the EF-Ts family.

The protein resides in the cytoplasm. In terms of biological role, associates with the EF-Tu.GDP complex and induces the exchange of GDP to GTP. It remains bound to the aminoacyl-tRNA.EF-Tu.GTP complex up to the GTP hydrolysis stage on the ribosome. The polypeptide is Elongation factor Ts (Cutibacterium acnes (strain DSM 16379 / KPA171202) (Propionibacterium acnes)).